The primary structure comprises 285 residues: Secreted alkaline triacylglycerol lipase (285 aa).

Residues 1–20 (MLFNYQSLLVGVSLISQALS) form the signal peptide. Residue Ser-159 is the Nucleophile of the active site. Residues Asp-215 and His-268 each act as charge relay system in the active site.

Belongs to the AB hydrolase superfamily. FaeA family.

The protein resides in the secreted. The catalysed reaction is a triacylglycerol + H2O = a diacylglycerol + a fatty acid + H(+). In terms of biological role, secreted alkaline lipase that hydrolyzes acylglycerol lipids such as triacylglycerols and consequently releases free fatty acid. Is able to hydrolyze tributyrin (1,2,3-tributyryl-glycerin). The protein is Secreted alkaline triacylglycerol lipase of Penicillium cyclopium.